A 385-amino-acid chain; its full sequence is Hsp70/Hsp90 co-chaperone CNS1 (385 aa).

The segment at 1 to 37 (MSSVNANGGYTKPQKYVPGPGDPELPPQLSEFKDKTS) is disordered. TPR repeat units follow at residues 83-116 (AENF…ECED), 121-154 (ESLY…NPKN), and 155-189 (VKCY…DPEN).

It belongs to the TTC4 family. As to quaternary structure, monomer. Component of Hsp70 and Hsp90 chaperone complexes. Interacts (via TPR repeats) with HSC82 and HSP82 (via C-terminal MEEVD pentapeptide). Interacts with CPR7, SSA1 and SPI1.

The protein resides in the cytoplasm. Its function is as follows. Co-chaperone that binds to the molecular chaperones Hsp90 (HSC82 and HSP82) and Hsp70 (SSA1). Stimulates SSA1 ATPase activity, but not Hsp90 ATPase activity. Involved in only a subset of Hsp90 functions. In Saccharomyces cerevisiae (strain ATCC 204508 / S288c) (Baker's yeast), this protein is Hsp70/Hsp90 co-chaperone CNS1 (CNS1).